The following is a 32-amino-acid chain: Hemocyanin C chain (32 aa).

This sequence belongs to the tyrosinase family. Hemocyanin subfamily. As to expression, hemolymph.

It is found in the secreted. The protein resides in the extracellular space. In terms of biological role, hemocyanins are copper-containing oxygen carriers occurring freely dissolved in the hemolymph of many mollusks and arthropods. The chain is Hemocyanin C chain from Cherax destructor (Common yabby crayfish).